The primary structure comprises 499 residues: T-cell activation inhibitor, mitochondrial (499 aa).

A coiled-coil region spans residues 206-233 (LRNSLPLRKELDRLKNELSELLQLSDIR).

In terms of tissue distribution, expressed in peripheral blood leukocytes, mainly in T-lymphocytes.

The protein localises to the mitochondrion. In terms of biological role, may regulate T-cell apoptosis. The protein is T-cell activation inhibitor, mitochondrial (TCAIM) of Mus musculus (Mouse).